The primary structure comprises 343 residues: Ferrochelatase (343 aa).

Positions 211 and 292 each coordinate Fe cation.

The protein belongs to the ferrochelatase family.

The protein resides in the cytoplasm. The catalysed reaction is heme b + 2 H(+) = protoporphyrin IX + Fe(2+). Its pathway is porphyrin-containing compound metabolism; protoheme biosynthesis; protoheme from protoporphyrin-IX: step 1/1. Its function is as follows. Catalyzes the ferrous insertion into protoporphyrin IX. This chain is Ferrochelatase, found in Gluconobacter oxydans (strain 621H) (Gluconobacter suboxydans).